The chain runs to 111 residues: Cornifelin (111 aa).

It belongs to the cornifelin family. As to quaternary structure, directly or indirectly cross-linked to CE proteins loricin and involucrin (IVL).

The protein localises to the cytoplasm. In terms of biological role, part of the insoluble cornified cell envelope (CE) of stratified squamous epithelia. In Mus musculus (Mouse), this protein is Cornifelin (Cnfn).